The chain runs to 668 residues: MAANMYRVGDYVYFENSSSNPYLVRRIEELNKTANGNVEAKVVCLFRRRDISSSLNSLADSNAREFEEESKQPGVSEQQRHQLKHRELFLSRQFESLPATHIRGKCSVTLLNETDILSQYLEKEDCFFYSLVFDPVQKTLLADQGEIRVGCKYQAEIPDRLVEGESDNRNQQKMEMKVWDPDNPLTDRQIDQFLVVARAVGTFARALDCSSSIRQPSLHMSAAAASRDITLFHAMDTLQRNGYDLAKAMSTLVPQGGPVLCRDEMEEWSASEAMLFEEALEKYGKDFNDIRQDFLPWKSLASIVQFYYMWKTTDRYIQQKRLKAAEADSKLKQVYIPTYTKPNPNQIISVGSKPGMNGAGFQKGLTCESCHTTQSAQWYAWGPPNMQCRLCASCWIYWKKYGGLKTPTQLEGATRGTTEPHSRGHLSRPEAQSLSPYTTSANRAKLLAKNRQTFLLQTTKLTRLARRMCRDLLQPRRAARRPYAPINANAIKAECSIRLPKAAKTPLKIHPLVRLPLATIVKDLVAQAPLKPKTPRGTKTPINRNQLSQNRGLGGIMVKRAYETMAGAGVPFSANGRPLASGIRSSSQPAAKRQKLNPADAPNPVVFVATKDTRALRKALTHLEMRRAARRPNLPLKVKPTLIAVRPPVPLPAPSHPASTNEPIVLED.

One can recognise a BAH domain in the interval 1–144; it reads MAANMYRVGD…PVQKTLLADQ (144 aa). Residues Ser-52 and Ser-54 each carry the phosphoserine modification. The ELM2 domain occupies 145–256; sequence GEIRVGCKYQ…KAMSTLVPQG (112 aa). Lys-152 carries the post-translational modification N6-acetyllysine. In terms of domain architecture, SANT spans 263 to 315; it reads DEMEEWSASEAMLFEEALEKYGKDFNDIRQDFLPWKSLASIVQFYYMWKTTDR. The segment at 367-394 adopts a GATA-type; atypical zinc-finger fold; that stretch reads CESCHTTQSAQWYAWGPPNMQCRLCASC. Over residues 409 to 419 the composition is skewed to polar residues; sequence QLEGATRGTTE. The tract at residues 409-437 is disordered; it reads QLEGATRGTTEPHSRGHLSRPEAQSLSPY. Ser-433 and Ser-435 each carry phosphoserine. Lys-460 carries the N6-acetyllysine modification. A Glycyl lysine isopeptide (Lys-Gly) (interchain with G-Cter in SUMO2 and SUMO3); alternate cross-link involves residue Lys-492. Lys-492 participates in a covalent cross-link: Glycyl lysine isopeptide (Lys-Gly) (interchain with G-Cter in SUMO2); alternate. A Glycyl lysine isopeptide (Lys-Gly) (interchain with G-Cter in SUMO2) cross-link involves residue Lys-508. 2 positions are modified to N6-acetyllysine: Lys-522 and Lys-531. The residue at position 534 (Thr-534) is a Phosphothreonine. Ser-548 carries the phosphoserine modification. Glycyl lysine isopeptide (Lys-Gly) (interchain with G-Cter in SUMO2) cross-links involve residues Lys-559 and Lys-595. Disordered regions lie at residues 580–599 and 647–668; these read ASGI…LNPA and PPVP…VLED.

Belongs to the metastasis-associated protein family. As to quaternary structure, component of the nucleosome remodeling and deacetylase (NuRD) repressor complex, composed of core proteins MTA1, MTA2, MTA3, RBBP4, RBBP7, HDAC1, HDAC2, MBD2, MBD3, and peripherally associated proteins CDK2AP1, CDK2AP2, GATAD2A, GATAD2B, CHD3, CHD4 and CHD5. The exact stoichiometry of the NuRD complex is unknown, and some subunits such as MBD2 and MBD3, GATAD2A and GATAD2B, and CHD3, CHD4 and CHD5 define mutually exclusive NuRD complexes. Interacts with CHD3. Interacts with CHD4. Interacts with GATAD2A. Interacts with HDAC7. Interacts with MBD3. Interacts with p53/TP53. Interacts with MINT. Interacts with PIMREG. Interacts with NACC2. Interacts with ERCC6. Interacts with PWWP2B. Interacts with transcription factor BCL11A. As to expression, widely expressed.

The protein resides in the nucleus. In terms of biological role, may function as a transcriptional coregulator. Acts as a component of the histone deacetylase NuRD complex which participates in the remodeling of chromatin. The protein is Metastasis-associated protein MTA2 (MTA2) of Homo sapiens (Human).